Reading from the N-terminus, the 431-residue chain is 3-phosphoshikimate 1-carboxyvinyltransferase (431 aa).

The 3-phosphoshikimate site is built by Lys21, Ser22, and Arg26. Residue Lys21 participates in phosphoenolpyruvate binding. Positions 93 and 121 each coordinate phosphoenolpyruvate. 3-phosphoshikimate is bound by residues Ser166, Gln168, Asp318, and Lys345. Residue Gln168 coordinates phosphoenolpyruvate. Asp318 (proton acceptor) is an active-site residue. The phosphoenolpyruvate site is built by Arg349 and Arg391.

It belongs to the EPSP synthase family. Monomer.

It is found in the cytoplasm. The catalysed reaction is 3-phosphoshikimate + phosphoenolpyruvate = 5-O-(1-carboxyvinyl)-3-phosphoshikimate + phosphate. The protein operates within metabolic intermediate biosynthesis; chorismate biosynthesis; chorismate from D-erythrose 4-phosphate and phosphoenolpyruvate: step 6/7. Functionally, catalyzes the transfer of the enolpyruvyl moiety of phosphoenolpyruvate (PEP) to the 5-hydroxyl of shikimate-3-phosphate (S3P) to produce enolpyruvyl shikimate-3-phosphate and inorganic phosphate. The polypeptide is 3-phosphoshikimate 1-carboxyvinyltransferase (Sulfurihydrogenibium sp. (strain YO3AOP1)).